The sequence spans 269 residues: Iron(3+)-hydroxamate import ATP-binding protein FhuC (269 aa).

Residues leucine 4–aspartate 240 form the ABC transporter domain. Residues glycine 36–serine 43 and leucine 160–aspartate 171 each bind ATP.

Belongs to the ABC transporter superfamily. Iron (Fe3+)-hydroxamate importer (TC 3.A.1.14.7) family. As to quaternary structure, the complex is composed of an ATP-binding protein (FhuC), two transmembrane proteins (FhuB and FhuG) and a solute-binding protein (FhuD or YxeB).

The protein resides in the cell membrane. It carries out the reaction ATP + H2O + Fe(3+)-hydroxamate complex-[hydroxamate-binding protein]Side 1 = ADP + phosphate + Fe(3+)-hydroxamate complexSide 2 + [hydroxamate-binding protein]Side 1.. Its function is as follows. Part of the ABC transporter complex FhuBGCD involved in iron(3+)-hydroxamate import. Responsible for energy coupling to the transport system. The polypeptide is Iron(3+)-hydroxamate import ATP-binding protein FhuC (fhuC) (Bacillus subtilis (strain 168)).